Consider the following 291-residue polypeptide: Ribosomal protein L11 methyltransferase (291 aa).

S-adenosyl-L-methionine-binding residues include Thr-136, Gly-159, Asp-181, and Asn-228.

This sequence belongs to the methyltransferase superfamily. PrmA family.

The protein localises to the cytoplasm. The enzyme catalyses L-lysyl-[protein] + 3 S-adenosyl-L-methionine = N(6),N(6),N(6)-trimethyl-L-lysyl-[protein] + 3 S-adenosyl-L-homocysteine + 3 H(+). Methylates ribosomal protein L11. In Rhizobium meliloti (strain 1021) (Ensifer meliloti), this protein is Ribosomal protein L11 methyltransferase.